Here is a 309-residue protein sequence, read N- to C-terminus: Glutaminase (309 aa).

Ser65, Asn117, Glu162, Asn169, Tyr193, Tyr245, and Val263 together coordinate substrate.

The protein belongs to the glutaminase family. As to quaternary structure, homotetramer.

It carries out the reaction L-glutamine + H2O = L-glutamate + NH4(+). In Bacillus cytotoxicus (strain DSM 22905 / CIP 110041 / 391-98 / NVH 391-98), this protein is Glutaminase.